A 281-amino-acid chain; its full sequence is Ribosomal protein L11 methyltransferase (281 aa).

S-adenosyl-L-methionine contacts are provided by threonine 133, glycine 154, aspartate 175, and asparagine 216.

This sequence belongs to the methyltransferase superfamily. PrmA family.

It localises to the cytoplasm. It carries out the reaction L-lysyl-[protein] + 3 S-adenosyl-L-methionine = N(6),N(6),N(6)-trimethyl-L-lysyl-[protein] + 3 S-adenosyl-L-homocysteine + 3 H(+). Functionally, methylates ribosomal protein L11. The protein is Ribosomal protein L11 methyltransferase of Campylobacter jejuni subsp. jejuni serotype O:23/36 (strain 81-176).